Here is a 1322-residue protein sequence, read N- to C-terminus: FERM and PDZ domain-containing protein 4 (1322 aa).

A WW domain is found at 33 to 66 (QVPPYGWEMTANRDGRDYFINHMTQAIPFDDPRL). Residues 78–155 (KVEMRRDPVL…SILLTVIQPY (78 aa)) form the PDZ domain. The region spanning 204 to 519 (NVLKVYLENG…GYYRLLVDSR (316 aa)) is the FERM domain. Disordered stretches follow at residues 809-847 (APPP…EIPV), 900-927 (SPES…TAQK), 952-983 (EFPA…PPKV), 1027-1080 (RKSK…STFN), 1105-1148 (SGLE…GQGD), 1160-1180 (AKDL…PSKL), and 1207-1227 (HFSL…TGSS). Residues 902 to 921 (ESSSDSGNETNSSEMTESSE) show a composition bias toward low complexity. Over residues 1041–1054 (NGNTTGKKQQGTKT) the composition is skewed to low complexity. Residues 1067–1080 (TVSSRDSQHLSTFN) show a composition bias toward polar residues. The span at 1207–1217 (HFSLQSSQGSS) shows a compositional bias: polar residues.

As to quaternary structure, interacts (via C-terminus) with DLG1, DLG2, DLG3 and DLG4/PSD95. Interacts (via N-terminus) with ARHGEF7; the interaction is mediated by the PDZ domain. Interacts with GPSM2 (via TPR repeat region).

The protein resides in the cell projection. The protein localises to the dendritic spine. Functionally, positive regulator of dendritic spine morphogenesis and density. Required for the maintenance of excitatory synaptic transmission. Binds phosphatidylinositol 4,5-bisphosphate. This is FERM and PDZ domain-containing protein 4 (FRMPD4) from Homo sapiens (Human).